Reading from the N-terminus, the 578-residue chain is MTIKSIISKHIKKVLNIIKIFITHEDLAIVRTSDKKVWDYQVNGIIKLANNLNKNPYVLSKYIISNMRYYEYKMYKKITASKLGFINIFINKTWLEKELTKKIKSFRLGIKKVTPKNIIIDYSSPNVAKKMHVGHLRSTILGDATARILEFLGHNVMRINHIGDWGTHFGMIIAYLKQNFISYNEINQLDLNELYQKAKVNFDLDSEFSKKTRNYVVKLQKKDKECIRIWKKIVKKTITENQKIYKKLNVTLTNKHIVGESFYNDMLPDIIQDLKTKKIAKQCNGAYIVFLNKFKNRDGAPMGVIIQKQDGAFLYSTIDLACLKYRCEVLRADQILYFIDSRQKEYLKQILEIAKKAGYISNNIIIRHNEFGMICSKNKRPFSTRSGNNIILSDLINEAIKRAKKIAKNKNKNLSNKELEYLSEKIGIGAIKYFDLSKNRLTDYIFKWDEILTFDGNTAPYMQYAYIRILSIFKKLNISMLKLSGNIILTELLENKLAIKLFQFEEIILESLQHSAPHIICKYLYELSKIFSKFYEKCSIYKSKNTKIRKNRLLLSLLTARTLKKGLFIIGISTIKYM.

A 'HIGH' region motif is present at residues 125–135; the sequence is PNVAKKMHVGH.

It belongs to the class-I aminoacyl-tRNA synthetase family. As to quaternary structure, monomer.

It localises to the cytoplasm. The catalysed reaction is tRNA(Arg) + L-arginine + ATP = L-arginyl-tRNA(Arg) + AMP + diphosphate. The sequence is that of Arginine--tRNA ligase from Buchnera aphidicola subsp. Baizongia pistaciae (strain Bp).